The following is a 160-amino-acid chain: Protein cornichon homolog 3 (160 aa).

Over 1–10 (MAFTFAAFCY) the chain is Cytoplasmic. The chain crosses the membrane as a helical span at residues 11-31 (MLSLVLCAALIFFAIWHIIAF). Residues 32–72 (DELRTDFKSPIDQCNPVHARERLRNIERICFLLRKLVLPEY) lie on the Lumenal side of the membrane. Residues 73–93 (SIHSLFCVMFLCAQEWLTLGL) form a helical membrane-spanning segment. Residues 94–138 (NVPLLFYHFWRYFHCPADSSELAYDPPVVMNADTLSYCQKEAWCK) are Cytoplasmic-facing. Residues 139–159 (LAFYLLSFFYYLYCMIYTLVS) traverse the membrane as a helical segment. Ser160 is a topological domain (lumenal).

This sequence belongs to the cornichon family. Acts as an auxiliary subunit for AMPA-selective glutamate receptors (AMPARs). Found in a complex with GRIA1, GRIA2, GRIA3, GRIA4, CNIH2, CACNG2, CACNG3, CACNG4, CACNG5, CACNG7 and CACNG8. In terms of tissue distribution, brain. Expressed in the neocortex, hippocampal formation, and cerebellum (at protein level).

The protein localises to the postsynaptic cell membrane. Its function is as follows. Regulates the trafficking and gating properties of AMPA-selective glutamate receptors (AMPARs). Promotes their targeting to the cell membrane and synapses and modulates their gating properties by regulating their rates of activation, deactivation and desensitization. The protein is Protein cornichon homolog 3 (Cnih3) of Rattus norvegicus (Rat).